Reading from the N-terminus, the 88-residue chain is DNA-directed RNA polymerase subunit omega (88 aa).

Belongs to the RNA polymerase subunit omega family. In terms of assembly, the RNAP catalytic core consists of 2 alpha, 1 beta, 1 beta' and 1 omega subunit. When a sigma factor is associated with the core the holoenzyme is formed, which can initiate transcription.

The enzyme catalyses RNA(n) + a ribonucleoside 5'-triphosphate = RNA(n+1) + diphosphate. Promotes RNA polymerase assembly. Latches the N- and C-terminal regions of the beta' subunit thereby facilitating its interaction with the beta and alpha subunits. In Anaeromyxobacter dehalogenans (strain 2CP-1 / ATCC BAA-258), this protein is DNA-directed RNA polymerase subunit omega.